A 965-amino-acid chain; its full sequence is Phosphatidylethanolamine N-methyltransferase (965 aa).

Residues 1-55 (MSSSAADPFAARLNSDVRQRHPTASATSKNVEGTSQQKQQQQQQQSEANAAASRV) form a disordered region. Over 1–91 (MSSSAADPFA…DPREPKNLSD (91 aa)) the chain is Lumenal. Residues 22–35 (PTASATSKNVEGTS) show a composition bias toward polar residues. Positions 36–45 (QQKQQQQQQQ) are enriched in low complexity. The helical transmembrane segment at 92–112 (VAVLAIIALHFLAAYYLPWGV) threads the bilayer. Over 113-115 (KRP) the chain is Cytoplasmic. A helical membrane pass occupies residues 116 to 136 (LFAAIFMFWRLAYNVGIGYLL). Over 137-201 (TIQSKYKLLV…EYNTWLTFRR (65 aa)) the chain is Lumenal. Residues 202–222 (VVDLILMCDFISYCLFAIVCA) form a helical membrane-spanning segment. Residues 223–229 (HKPDGEG) lie on the Cytoplasmic side of the membrane. Residues 230 to 250 (LFMCFARWAAGITLVGFNLWV) traverse the membrane as a helical segment. The Lumenal portion of the chain corresponds to 251–279 (KLDAHRVVKDYAWYWGDFFYLIEQELTFD). Residues 280 to 300 (GVFELAPHPMYSIGYAGYYGI) form a helical membrane-spanning segment. At 301–306 (SMMAAS) the chain is on the cytoplasmic side. Residues 307–327 (YDVLFISIIAHAAQFAFLVIV) form a helical membrane-spanning segment. The Lumenal portion of the chain corresponds to 328–389 (ENPHIEKTYN…IGLKNLDFFR (62 aa)). Residues 390–410 (ITDVAIVLLCAYLAVVTMVTP) form a helical membrane-spanning segment. Over 411–417 (NTRFYQA) the chain is Cytoplasmic. A helical transmembrane segment spans residues 418–438 (LFVLHALAWRLWYSAGLGVIL). The Lumenal portion of the chain corresponds to 439–467 (TMQSEEKMFTRHFLKYGESVGEAWRQWKG). The helical transmembrane segment at 468 to 488 (IYHLSNCLCHASFIAASYKMY) threads the bilayer. Residues 489 to 496 (EFPADWTY) are Cytoplasmic-facing. Residues 497 to 517 (GWALLKHVVGLSLIALQVWTA) form a helical membrane-spanning segment. Topologically, residues 518–573 (TSIYESLGEFGWFYGDFFFDSKRQLTYTSIYRFLNNPERVFGTAGLWGAALITWSR) are lumenal. A helical membrane pass occupies residues 574–594 (AIFLMALAGHFLTLAFLAYVE). The Cytoplasmic portion of the chain corresponds to 595–965 (KPHMQKVYGR…TTPVDSKFSE (371 aa)).

The protein belongs to the class VI-like SAM-binding methyltransferase superfamily. CHO2 family.

The protein localises to the endoplasmic reticulum membrane. The enzyme catalyses a 1,2-diacyl-sn-glycero-3-phosphoethanolamine + S-adenosyl-L-methionine = a 1,2-diacyl-sn-glycero-3-phospho-N-methylethanolamine + S-adenosyl-L-homocysteine + H(+). Its pathway is phospholipid metabolism; phosphatidylcholine biosynthesis. Catalyzes the first step of the methylation pathway of phosphatidylcholine biosynthesis, the SAM-dependent methylation of phosphatidylethanolamine (PE) to phosphatidylmonomethylethanolamine (PMME). In Neurospora crassa (strain ATCC 24698 / 74-OR23-1A / CBS 708.71 / DSM 1257 / FGSC 987), this protein is Phosphatidylethanolamine N-methyltransferase.